Reading from the N-terminus, the 426-residue chain is 5-methylthioadenosine/S-adenosylhomocysteine deaminase (426 aa).

Zn(2+)-binding residues include H60 and H62. Substrate contacts are provided by E89 and H179. H206 is a Zn(2+) binding site. Positions 209 and 294 each coordinate substrate. D294 serves as a coordination point for Zn(2+).

This sequence belongs to the metallo-dependent hydrolases superfamily. MTA/SAH deaminase family. Zn(2+) serves as cofactor.

It carries out the reaction S-adenosyl-L-homocysteine + H2O + H(+) = S-inosyl-L-homocysteine + NH4(+). The enzyme catalyses S-methyl-5'-thioadenosine + H2O + H(+) = S-methyl-5'-thioinosine + NH4(+). Catalyzes the deamination of 5-methylthioadenosine and S-adenosyl-L-homocysteine into 5-methylthioinosine and S-inosyl-L-homocysteine, respectively. Is also able to deaminate adenosine. In Dictyoglomus thermophilum (strain ATCC 35947 / DSM 3960 / H-6-12), this protein is 5-methylthioadenosine/S-adenosylhomocysteine deaminase.